The following is a 265-amino-acid chain: Short-chain dehydrogenase/reductase GME11373 (265 aa).

Residues I26, D72, N99, and R132 each contribute to the NADP(+) site. Active-site proton donor residues include S148 and S149. Residues Y163, K167, and T198 each contribute to the NADP(+) site. The Proton acceptor role is filled by Y163. The active-site Lowers pKa of active site Tyr is the K167.

The protein belongs to the short-chain dehydrogenases/reductases (SDR) family.

It participates in secondary metabolite biosynthesis. Short-chain dehydrogenase/reductase; part of the gene cluster that mediates the biosynthesis of dibenzodioxocinones such as pestalotiollide B, a novel class of inhibitors against cholesterol ester transfer protein (CEPT). The biosynthesis initiates from condensation of acetate and malonate units catalyzed by the non-reducing PKS pks8/GME11356. Pks8/GME11356 lacks a thioesterase (TE) domain, which is important to the cyclizing of the third ring of atrochrysone carboxylic acid, and the esterase GME11355 might play the role of TE and catalyzes the cyclization reaction of the C ring. The lactamase-like protein GME11357 (or other beta-lactamases in Pestalotiopsis microspora) probably hydrolyzes the thioester bond between the ACP of pks8/GME11356 and the intermediate to release atrochrysone carboxylic acid, which is spontaneously dehydrates to form endocrocin anthrone. Endocrocin anthrone is further converted to emodin via the endocrocin intermediate. Emodin is then oxidized by several enzymes such as the Baeyer-Villiger oxidase GME11358, the oxidoreductase GME11367, the short chain dehydrogenase/reductase GME11373, as well as by other oxidoreductases from the cluster, to modify the A and C rings and open the B ring, and finally yield monodictyphenone. The prenyltransferase GME11375 may catalyze the addition reaction between the C5 side chains and the carbon bone of dibenzodioxocinones. The remaining biochemical reactions to the final product dibenzodioxocinones should be methylation catalyzed by methyltransferase GME11366 and reduction and lactonization reaction catalyzed by a series of oxidordeuctases. The sequence is that of Short-chain dehydrogenase/reductase GME11373 from Pestalotiopsis microspora.